The chain runs to 332 residues: MAESRSNRAAVQATNDDASASKLSCVKKGYMKDDYVHLFVKRPVRRSPIINRGYFSRWAAFRKLMSQFLLSGTSSKKQILSLGAGFDTTYFQLLDEGNGPNLYVELDFKEVTSKKAAVIQNSSQLRDKLGANASISIDEGQVLSDHYKLLPVDLRDIPKLRDVISFADMDLSLPTFIIAECVLIYLDPDSSRAIVNWSSKTFSTAVFFLYEQIHPDDAFGHQMIRNLESRGCALLSIDASPTLLAKERLFLDNGWQRAVAWDMLKVYGSFVDTQEKRRIERLELFDEFEEWHMMQEHYCVTYAVNDAMGIFGDFGFTREGGGERMSSSASSP.

Residues Lys22, Arg57, Gly83, Asp107, 153–154 (DL), and Glu180 each bind S-adenosyl-L-methionine.

Belongs to the methyltransferase superfamily. LCMT family.

It localises to the cytoplasm. Its subcellular location is the membrane. The catalysed reaction is [phosphatase 2A protein]-C-terminal L-leucine + S-adenosyl-L-methionine = [phosphatase 2A protein]-C-terminal L-leucine methyl ester + S-adenosyl-L-homocysteine. In terms of biological role, methylates the carboxyl group of the C-terminal leucine residue of protein phosphatase 2A (PP2A) catalytic subunits to form alpha-leucine ester residues. Involved in brassinosteroid (BR) signaling. Plays a negative role in BR signaling pathway. Functions as a positive regulator of BRI1 receptor-kinase degradation. Methylates PP2A, thus facilitating its association with activated BRI1. This leads to receptor dephosphorylation and degradation, and thus to the termination of BR signaling. May act upstream of ASK7/BIN2. Involved in methylation of PP2A during environmental stress responses. This chain is Leucine carboxyl methyltransferase 1 homolog, found in Arabidopsis thaliana (Mouse-ear cress).